We begin with the raw amino-acid sequence, 453 residues long: Putative amino acid/polyamine transporter MPH_07630_2 (453 aa).

Helical transmembrane passes span 2–21 (IGFS…VLVV), 30–50 (VMIW…YSMA), and 81–101 (VCGW…NFIA). The N-linked (GlcNAc...) asparagine glycan is linked to N110. Helical transmembrane passes span 121 to 141 (WHAV…SIFL) and 151 to 171 (AILI…LATN). N186 is a glycosylation site (N-linked (GlcNAc...) asparagine). 2 consecutive transmembrane segments (helical) span residues 193–213 (AYAA…YDAP) and 231–251 (IVMS…SLCF). Residue N274 is glycosylated (N-linked (GlcNAc...) asparagine). 4 consecutive transmembrane segments (helical) span residues 277-297 (GSVA…LVCA), 330-350 (LGVP…FNSI), 358-378 (FNTV…IPLL), and 403-423 (GLLA…TFNF). N435 carries N-linked (GlcNAc...) asparagine glycosylation.

The protein belongs to the amino acid-polyamine-organocation (APC) superfamily.

The protein resides in the membrane. The protein is Putative amino acid/polyamine transporter MPH_07630_2 of Macrophomina phaseolina (strain MS6) (Charcoal rot fungus).